Here is a 473-residue protein sequence, read N- to C-terminus: H(+)/Cl(-) exchange transporter ClcA (473 aa).

Residues 1–32 (MNTDTPTFEAQQVVRLRRGDLIRRLLQRDKTP) are Cytoplasmic-facing. Residues 33-69 (LAILLTAAVVGTVTGLIGVAFEKAVTWVQNLRIGALV) traverse the membrane as a helical segment. Over 70-76 (QTADYAI) the chain is Periplasmic. A helical transmembrane segment spans residues 77–100 (LVWPLAFILSALLAMVGYFLVRKF). Residues 101–108 (APEAGGSG) lie on the Cytoplasmic side of the membrane. The Selectivity filter part_1 signature appears at 106 to 110 (GSGIP). Serine 107 lines the chloride pocket. The segment at residues 109 to 116 (IPEIEGAL) is an intramembrane region (helical). At 117-123 (EELRPVR) the chain is on the cytoplasmic side. Residues 124–141 (WWRVLPVKFVGGMGTLGA) form a helical membrane-spanning segment. The Periplasmic portion of the chain corresponds to 142 to 147 (GMVLGR). The Selectivity filter part_2 signature appears at 146–150 (GREGP). Residues 148–166 (EGPTVQIGGNIGRMVLDLF) traverse the membrane as a helical segment. At 167-176 (RMRSAEARHT) the chain is on the cytoplasmic side. Intramembrane regions (helical) lie at residues 177–189 (LLAT…LSAA) and 193–201 (PLAGILFII). The Cytoplasmic segment spans residues 202–214 (EEMRPQFRYNLIS). Residues 215–232 (IKAVFTGVIMSSIVFRIF) form a helical membrane-spanning segment. At 233–252 (NGEAPIIEVGKLSNAPVNTL) the chain is on the periplasmic side. Residues 253–281 (WLYLILGMIFGCVGPLFNHLVLRTQDMFQ) form a helical membrane-spanning segment. Residues 282 to 287 (RFHGGE) lie on the Cytoplasmic side of the membrane. A helical transmembrane segment spans residues 288-309 (IKKWVLMGGAIGGLCGILGLIE). At 310 to 329 (PEAAGGGFNLIPIAAAGNYS) the chain is on the periplasmic side. Residues 330-349 (VGLLLFIFIARVLTTLLCFS) traverse the membrane as a helical segment. Residues 350–354 (SGAPG) are Cytoplasmic-facing. The Selectivity filter part_3 signature appears at 355 to 359 (GIFAP). The chain crosses the membrane as a helical span at residues 355-376 (GIFAPMLALGTLLGTAFGMAAA). Residues isoleucine 356 and phenylalanine 357 each coordinate chloride. Topologically, residues 377–386 (ACFPQYHLEA) are periplasmic. The helical intramembrane region spans 387–401 (GTFAIAGMGALLAAS). An intramembrane region (note=Loop between two helices) is located at residues 402–404 (VRA). Residues 405–416 (PLTGIVLVLEMT) constitute an intramembrane region (helical). Positions 417-421 (DNYQL) form an intramembrane region, note=Loop between two helices. Residues 422-438 (ILPMIITCLGATLLAQF) form a helical membrane-spanning segment. At 439 to 473 (MGGKPLYSTILARTLAKQDAEQAAKSQRSVAGENT) the chain is on the cytoplasmic side. Tyrosine 445 contacts chloride.

This sequence belongs to the chloride channel (TC 2.A.49) family. ClcA subfamily. In terms of assembly, homodimer.

It localises to the cell inner membrane. The enzyme catalyses 2 chloride(in) + H(+)(out) = 2 chloride(out) + H(+)(in). In terms of biological role, proton-coupled chloride transporter. Functions as antiport system and exchanges two chloride ions for 1 proton. Probably acts as an electrical shunt for an outwardly-directed proton pump that is linked to amino acid decarboxylation, as part of the extreme acid resistance (XAR) response. The protein is H(+)/Cl(-) exchange transporter ClcA of Citrobacter koseri (strain ATCC BAA-895 / CDC 4225-83 / SGSC4696).